The following is a 196-amino-acid chain: MSRYRGPRFKKIRRLGTLPGLTSKRPKSGSDLKTQLRSGKRSQYRIRLEEKQKLRFHYGLTERQLVRYVHIAGKAKGSTGQVLLQLLEMRLDNILFRLGMASTIPRARQLVNHRHILVNGRIVDIPSYRCKPRDIITTKDKQRSKALIQNYIASPPPEELPKHLTIDSFQYKGLVNQIIDSKWIGLKINELLVVEY.

The tract at residues 16–36 is disordered; the sequence is GTLPGLTSKRPKSGSDLKTQL. An S4 RNA-binding domain is found at 89-150; sequence MRLDNILFRL…KQRSKALIQN (62 aa).

The protein belongs to the universal ribosomal protein uS4 family. In terms of assembly, part of the 30S ribosomal subunit. Contacts protein S5. The interaction surface between S4 and S5 is involved in control of translational fidelity.

The protein localises to the plastid. The protein resides in the chloroplast. In terms of biological role, one of the primary rRNA binding proteins, it binds directly to 16S rRNA where it nucleates assembly of the body of the 30S subunit. Its function is as follows. With S5 and S12 plays an important role in translational accuracy. This chain is Small ribosomal subunit protein uS4c (rps4), found in Rhapis humilis (Slender lady palm).